Reading from the N-terminus, the 117-residue chain is Large ribosomal subunit protein bL19 (117 aa).

Belongs to the bacterial ribosomal protein bL19 family.

Functionally, this protein is located at the 30S-50S ribosomal subunit interface and may play a role in the structure and function of the aminoacyl-tRNA binding site. In Vesicomyosocius okutanii subsp. Calyptogena okutanii (strain HA), this protein is Large ribosomal subunit protein bL19.